We begin with the raw amino-acid sequence, 329 residues long: Succinylglutamate desuccinylase (329 aa).

Residues H53, E56, and H148 each coordinate Zn(2+). E211 is an active-site residue.

Belongs to the AspA/AstE family. Succinylglutamate desuccinylase subfamily. Zn(2+) is required as a cofactor.

It carries out the reaction N-succinyl-L-glutamate + H2O = L-glutamate + succinate. It functions in the pathway amino-acid degradation; L-arginine degradation via AST pathway; L-glutamate and succinate from L-arginine: step 5/5. Functionally, transforms N(2)-succinylglutamate into succinate and glutamate. The protein is Succinylglutamate desuccinylase of Erwinia tasmaniensis (strain DSM 17950 / CFBP 7177 / CIP 109463 / NCPPB 4357 / Et1/99).